The chain runs to 62 residues: UPF0291 protein CLK_1994 (62 aa).

The protein belongs to the UPF0291 family.

It is found in the cytoplasm. This chain is UPF0291 protein CLK_1994, found in Clostridium botulinum (strain Loch Maree / Type A3).